The following is a 228-amino-acid chain: UPF0758 protein RALTA_A2508 (228 aa).

The MPN domain maps to 102–224; that stretch reads GFDSPDSVRS…IRSLAESCER (123 aa). Residues H173, H175, and D186 each contribute to the Zn(2+) site. The short motif at 173–186 is the JAMM motif element; the sequence is HNHPRGTTAPSQSD.

Belongs to the UPF0758 family.

The chain is UPF0758 protein RALTA_A2508 from Cupriavidus taiwanensis (strain DSM 17343 / BCRC 17206 / CCUG 44338 / CIP 107171 / LMG 19424 / R1) (Ralstonia taiwanensis (strain LMG 19424)).